We begin with the raw amino-acid sequence, 122 residues long: Urease subunit beta (122 aa).

Belongs to the urease beta subunit family. Heterotrimer of UreA (gamma), UreB (beta) and UreC (alpha) subunits. Three heterotrimers associate to form the active enzyme.

It is found in the cytoplasm. The enzyme catalyses urea + 2 H2O + H(+) = hydrogencarbonate + 2 NH4(+). The protein operates within nitrogen metabolism; urea degradation; CO(2) and NH(3) from urea (urease route): step 1/1. The polypeptide is Urease subunit beta (Flavobacterium johnsoniae (strain ATCC 17061 / DSM 2064 / JCM 8514 / BCRC 14874 / CCUG 350202 / NBRC 14942 / NCIMB 11054 / UW101) (Cytophaga johnsonae)).